We begin with the raw amino-acid sequence, 100 residues long: Aspartyl/glutamyl-tRNA(Asn/Gln) amidotransferase subunit C (100 aa).

This sequence belongs to the GatC family. As to quaternary structure, heterotrimer of A, B and C subunits.

It carries out the reaction L-glutamyl-tRNA(Gln) + L-glutamine + ATP + H2O = L-glutaminyl-tRNA(Gln) + L-glutamate + ADP + phosphate + H(+). The enzyme catalyses L-aspartyl-tRNA(Asn) + L-glutamine + ATP + H2O = L-asparaginyl-tRNA(Asn) + L-glutamate + ADP + phosphate + 2 H(+). Allows the formation of correctly charged Asn-tRNA(Asn) or Gln-tRNA(Gln) through the transamidation of misacylated Asp-tRNA(Asn) or Glu-tRNA(Gln) in organisms which lack either or both of asparaginyl-tRNA or glutaminyl-tRNA synthetases. The reaction takes place in the presence of glutamine and ATP through an activated phospho-Asp-tRNA(Asn) or phospho-Glu-tRNA(Gln). In Streptococcus agalactiae serotype III (strain NEM316), this protein is Aspartyl/glutamyl-tRNA(Asn/Gln) amidotransferase subunit C.